Here is a 142-residue protein sequence, read N- to C-terminus: Ribosome maturation factor RimP (142 aa).

The protein belongs to the RimP family.

It is found in the cytoplasm. Required for maturation of 30S ribosomal subunits. The sequence is that of Ribosome maturation factor RimP from Nitratiruptor sp. (strain SB155-2).